The primary structure comprises 348 residues: Phosphoribosylformylglycinamidine cyclo-ligase (348 aa).

It belongs to the AIR synthase family.

The protein resides in the cytoplasm. It catalyses the reaction 2-formamido-N(1)-(5-O-phospho-beta-D-ribosyl)acetamidine + ATP = 5-amino-1-(5-phospho-beta-D-ribosyl)imidazole + ADP + phosphate + H(+). It functions in the pathway purine metabolism; IMP biosynthesis via de novo pathway; 5-amino-1-(5-phospho-D-ribosyl)imidazole from N(2)-formyl-N(1)-(5-phospho-D-ribosyl)glycinamide: step 2/2. The polypeptide is Phosphoribosylformylglycinamidine cyclo-ligase (Citrifermentans bemidjiense (strain ATCC BAA-1014 / DSM 16622 / JCM 12645 / Bem) (Geobacter bemidjiensis)).